We begin with the raw amino-acid sequence, 185 residues long: Ribosome-recycling factor (185 aa).

The protein belongs to the RRF family.

The protein resides in the cytoplasm. Responsible for the release of ribosomes from messenger RNA at the termination of protein biosynthesis. May increase the efficiency of translation by recycling ribosomes from one round of translation to another. The polypeptide is Ribosome-recycling factor (Mycobacterium avium (strain 104)).